A 334-amino-acid chain; its full sequence is MHTGTTLTQFIIEDQRHIAGASGDFTALLNDIVTAIKTISNAVNKGALIGVMGALDTENVQGETQKKLDVITNEIMIRHNEWAGHLAGMASEEMDDVYLIPNRYPLGKYLLVFDPLDGSSNVDINISVGTIFSILRAPVPGQAASMEDFLQPGTKQVCAGYALYGSSTMLVLTTGHGVNGFTLDRDIGEFVLTHPGMKIPADTREFAINASNQRFWEEPVQRYVSECLAGSTGPRNRDFNMRWVASMVAEVHRILTRGGIFMYPRDTKDPSKPGRLRLMYEASPMSFIVEQAGGLSTTGYERILDISPENLHQRVPVILGSKNEVEVVLGYHKA.

4 residues coordinate Mg(2+): E92, D114, L116, and D117. Residues 117 to 120 (DGSS) and N209 each bind substrate. Mg(2+) is bound at residue E281.

It belongs to the FBPase class 1 family. Homotetramer. It depends on Mg(2+) as a cofactor.

Its subcellular location is the cytoplasm. It catalyses the reaction beta-D-fructose 1,6-bisphosphate + H2O = beta-D-fructose 6-phosphate + phosphate. Its pathway is carbohydrate biosynthesis; gluconeogenesis. In Nitrosomonas eutropha (strain DSM 101675 / C91 / Nm57), this protein is Fructose-1,6-bisphosphatase class 1.